The primary structure comprises 686 residues: Glycine--tRNA ligase beta subunit (686 aa).

This sequence belongs to the class-II aminoacyl-tRNA synthetase family. In terms of assembly, tetramer of two alpha and two beta subunits.

The protein resides in the cytoplasm. The enzyme catalyses tRNA(Gly) + glycine + ATP = glycyl-tRNA(Gly) + AMP + diphosphate. The chain is Glycine--tRNA ligase beta subunit from Halothermothrix orenii (strain H 168 / OCM 544 / DSM 9562).